Reading from the N-terminus, the 597-residue chain is Elongation factor 4 (597 aa).

The region spanning 2–184 (QHIRNFSIIA…SIVARVPPPK (183 aa)) is the tr-type G domain. GTP-binding positions include 14 to 19 (DHGKST) and 131 to 134 (NKMD).

It belongs to the TRAFAC class translation factor GTPase superfamily. Classic translation factor GTPase family. LepA subfamily.

The protein resides in the cell inner membrane. The catalysed reaction is GTP + H2O = GDP + phosphate + H(+). Required for accurate and efficient protein synthesis under certain stress conditions. May act as a fidelity factor of the translation reaction, by catalyzing a one-codon backward translocation of tRNAs on improperly translocated ribosomes. Back-translocation proceeds from a post-translocation (POST) complex to a pre-translocation (PRE) complex, thus giving elongation factor G a second chance to translocate the tRNAs correctly. Binds to ribosomes in a GTP-dependent manner. The protein is Elongation factor 4 of Bordetella bronchiseptica (strain ATCC BAA-588 / NCTC 13252 / RB50) (Alcaligenes bronchisepticus).